The sequence spans 86 residues: Gas vesicle protein A1 (86 aa).

Belongs to the gas vesicle GvpA family. The gas vesicle shell is 2 nm thick and consists of a single layer of this protein. It forms helical ribs nearly perpendicular to the long axis of the vesicle.

It is found in the gas vesicle shell. Its function is as follows. Gas vesicles are hollow, gas filled proteinaceous nanostructures found in some microorganisms. During planktonic growth they allow positioning of the organism at a favorable depth for light or nutrient acquisition. GvpA forms the protein shell. Functionally, it is not clear if the 2 type A proteins in this organism are functionally redundant. In terms of biological role, when the full gvp locus (gvpA1-gvpP-gvpQ-gvpA2-gvpR-gvpN-gvpF-gvpG-gvpL-gvpS-gvpK-gvpJ-gvpT-gvpU, called pNL26) is expressed in E.coli gas vesicles are made. In Priestia megaterium (Bacillus megaterium), this protein is Gas vesicle protein A1.